Consider the following 129-residue polypeptide: NADPH-dependent 7-cyano-7-deazaguanine reductase (129 aa).

The Thioimide intermediate role is filled by C42. Residue D49 is the Proton donor of the active site. Residues 64-66 (VEL) and 83-84 (HE) each bind substrate.

This sequence belongs to the GTP cyclohydrolase I family. QueF type 1 subfamily.

The protein localises to the cytoplasm. The enzyme catalyses 7-aminomethyl-7-carbaguanine + 2 NADP(+) = 7-cyano-7-deazaguanine + 2 NADPH + 3 H(+). The protein operates within tRNA modification; tRNA-queuosine biosynthesis. Functionally, catalyzes the NADPH-dependent reduction of 7-cyano-7-deazaguanine (preQ0) to 7-aminomethyl-7-deazaguanine (preQ1). This is NADPH-dependent 7-cyano-7-deazaguanine reductase from Synechococcus sp. (strain CC9605).